A 441-amino-acid chain; its full sequence is 3-phosphoshikimate 1-carboxyvinyltransferase (441 aa).

Residues Lys25, Ser26, and Arg30 each contribute to the 3-phosphoshikimate site. Lys25 serves as a coordination point for phosphoenolpyruvate. 2 residues coordinate phosphoenolpyruvate: Gly97 and Arg125. 3-phosphoshikimate-binding residues include Ser169, Gln170, Asp311, and Lys338. Gln170 contacts phosphoenolpyruvate. The active-site Proton acceptor is Asp311. Arg342, Arg383, and Lys410 together coordinate phosphoenolpyruvate.

This sequence belongs to the EPSP synthase family. As to quaternary structure, monomer.

It localises to the cytoplasm. It catalyses the reaction 3-phosphoshikimate + phosphoenolpyruvate = 5-O-(1-carboxyvinyl)-3-phosphoshikimate + phosphate. The protein operates within metabolic intermediate biosynthesis; chorismate biosynthesis; chorismate from D-erythrose 4-phosphate and phosphoenolpyruvate: step 6/7. Its function is as follows. Catalyzes the transfer of the enolpyruvyl moiety of phosphoenolpyruvate (PEP) to the 5-hydroxyl of shikimate-3-phosphate (S3P) to produce enolpyruvyl shikimate-3-phosphate and inorganic phosphate. The protein is 3-phosphoshikimate 1-carboxyvinyltransferase of Chlamydia muridarum (strain MoPn / Nigg).